Reading from the N-terminus, the 610-residue chain is Phosphomethylpyrimidine synthase (610 aa).

Substrate is bound by residues asparagine 216, methionine 245, tyrosine 274, histidine 310, 330-332 (SRG), 371-374 (DGLR), and glutamate 410. Residue histidine 414 participates in Zn(2+) binding. Position 437 (tyrosine 437) interacts with substrate. Histidine 478 is a binding site for Zn(2+). [4Fe-4S] cluster-binding residues include cysteine 558, cysteine 561, and cysteine 566.

Belongs to the ThiC family. In terms of assembly, homodimer. Requires [4Fe-4S] cluster as cofactor.

It catalyses the reaction 5-amino-1-(5-phospho-beta-D-ribosyl)imidazole + S-adenosyl-L-methionine = 4-amino-2-methyl-5-(phosphooxymethyl)pyrimidine + CO + 5'-deoxyadenosine + formate + L-methionine + 3 H(+). It functions in the pathway cofactor biosynthesis; thiamine diphosphate biosynthesis. Its function is as follows. Catalyzes the synthesis of the hydroxymethylpyrimidine phosphate (HMP-P) moiety of thiamine from aminoimidazole ribotide (AIR) in a radical S-adenosyl-L-methionine (SAM)-dependent reaction. This is Phosphomethylpyrimidine synthase from Rhizobium etli (strain ATCC 51251 / DSM 11541 / JCM 21823 / NBRC 15573 / CFN 42).